The following is a 62-amino-acid chain: Conotoxin reg3.7 (62 aa).

The signal sequence occupies residues 1-15 (RVLLTICLLLFPLSA). A propeptide spanning residues 16-45 (LPLDGDQPADQPARHMQSAERNPRFDPVKR) is cleaved from the precursor. The interval 17 to 37 (PLDGDQPADQPARHMQSAERN) is disordered. Cystine bridges form between Cys-46–Cys-60, Cys-47–Cys-58, and Cys-52–Cys-61. Cys-61 bears the Cysteine amide mark.

It belongs to the conotoxin M superfamily. Expressed by the venom duct.

It is found in the secreted. In Conus regius (Crown cone), this protein is Conotoxin reg3.7.